The sequence spans 380 residues: Lipid-A-disaccharide synthase (380 aa).

Belongs to the LpxB family.

The enzyme catalyses a lipid X + a UDP-2-N,3-O-bis[(3R)-3-hydroxyacyl]-alpha-D-glucosamine = a lipid A disaccharide + UDP + H(+). The protein operates within bacterial outer membrane biogenesis; LPS lipid A biosynthesis. In terms of biological role, condensation of UDP-2,3-diacylglucosamine and 2,3-diacylglucosamine-1-phosphate to form lipid A disaccharide, a precursor of lipid A, a phosphorylated glycolipid that anchors the lipopolysaccharide to the outer membrane of the cell. In Azotobacter vinelandii (strain DJ / ATCC BAA-1303), this protein is Lipid-A-disaccharide synthase.